Consider the following 615-residue polypeptide: Sterol 3-beta-glucosyltransferase UGT80B1 (615 aa).

The segment at 1–54 is disordered; that stretch reads MASNVFDHPLQELEGEDNGVKSEKASLLETSGSVDTTPEDSGHRSSDGHRGLDH. The span at 40-54 shows a compositional bias: basic and acidic residues; sequence DSGHRSSDGHRGLDH.

Belongs to the glycosyltransferase 28 family. As to expression, expressed in developing seeds, seedlings, leaves and around the apical tip of cotyledons. In embryo, expressed in the seed coat and cotyledons.

It carries out the reaction a sterol + UDP-alpha-D-glucose = a sterol 3-beta-D-glucoside + UDP + H(+). In terms of biological role, involved in the biosynthesis of sterol glucosides. Catalyzes the synthesis of steryl glycosides (SGs) and acyl steryl glycosides (ASGs) which are the most abundant sterol derivatives in higher plants. Can act on several sterols like sitosterol, campesterol and stigmasterol. Is required for embryonic development, seed suberin accumulation, cutin formation and flavanoid accumulation in the seed coat. Both UGT80A2 and UGT80B1 are required for the normal production of SGs and ASGs in seeds. This Arabidopsis thaliana (Mouse-ear cress) protein is Sterol 3-beta-glucosyltransferase UGT80B1.